An 879-amino-acid polypeptide reads, in one-letter code: MDQFKGEPRLPKFAVPKRYDLRLNPDLIACTFTGTVAIDLDIVADTRFIVLNAADLSVNDASVSFTPPSSSKALAAPKVVLFEEDEILVLEFGEILPHGVGVLKLGFNGVLNDKMKGFYRSTYEHNGEKKNMAVTQFEPADARRCFPCWDEPACKATFKITLEVPTDLVALSNMPIMEEKVNGNLKIVSYQESPIMSTYLVAIVVGLFDYVEDHTSDGIKVRVYCQVGKADQGKFALHVGAKTLDLFKEYFAVPYPLPKMDMIAIPDFAAGAMENYGLVTYRETALLYDEQHSAASNKQRVATVVAHELAHQWFGNLVTMEWWTHLWLNEGFATWVSYLATDSLFPEWKIWTQFLDESTEGLRLDGLEESHPIEVEVNHAAEIDEIFDAISYRKGASVIRMLQSYLGAEVFQKSLAAYIKNHAYSNAKTEDLWAALEAGSGEPVNKLMSSWTKQKGYPVVSAKIKDGKLELEQSRFLSSGSPGEGQWIVPVTLCCGSYEKRKNFLLESKSGAYDLKELLGCSIADGSDKINGTCSWIKINVDQAGFYRVKYDDSLAAGLRNATESQSLTSIDRYGILDDSFALTMARQQSLASLLTLCSAYKKELDYTVLSNLIAISYKVVKIGADANQELMSGIKHFFIGVFQFAAGKLGWDPKQGESHLDAMLRGEVLTALAVFGHDETLKEAVRRFDAFLADRNTPLLPPDIRRAAYVAVMQRANKSDKSGYESLLRVYRETDLSQEKTRILGSLASCPDPTIVQDVLNFVLSDEVRNQDALYGLSGVSWEGREVAWKWLQEKWEYIGNTWGSGFLITRFISAVVSPFASFEKAKEVEEFFATRSKPSMARTLKQSIERVHINANWVESIKKEDNLTQLVAQLSSN.

The interval 98 to 205 is required for membrane association; that stretch reads HGVGVLKLGF…MSTYLVAIVV (108 aa). Substrate is bound by residues Glu138 and 271–275; that span reads GAMEN. His307 contacts Zn(2+). Glu308 acts as the Proton acceptor in catalysis. The Zn(2+) site is built by His311 and Glu330. A Dileucine internalization motif motif is present at residues 728-729; it reads LL.

This sequence belongs to the peptidase M1 family. In terms of assembly, homodimer. Interacts with N-1-naphthylphthalamic acid (NPA). Zn(2+) is required as a cofactor. Ubiquitous with preferential expression in 5 days-old seedlings, roots, young flowers, upper inflorescence stems, and rosette leaves.

The protein localises to the membrane. It is found in the microsome membrane. The protein resides in the cytoplasm. It carries out the reaction Release of an N-terminal amino acid, Xaa-|-Yaa- from a peptide, amide or arylamide. Xaa is preferably Ala, but may be most amino acids including Pro (slow action). When a terminal hydrophobic residue is followed by a prolyl residue, the two may be released as an intact Xaa-Pro dipeptide.. Functionally, metallopeptidase that binds to the auxin transport inhibitor N-1-naphthylphthalamic acid (NPA). Required for embryonic and seedling development as well as cell cycle progression. Homodimerization is required to proper localization and activity. May play a negative role in the regulation of PIN auxin transport proteins. The sequence is that of Aminopeptidase M1 (APM1) from Arabidopsis thaliana (Mouse-ear cress).